The chain runs to 121 residues: Small ribosomal subunit protein uS13 (121 aa).

Positions 97-121 (PVRGQKTHSNARTRKGPRASRIKKK) are disordered. A compositionally biased stretch (basic residues) spans 101–121 (QKTHSNARTRKGPRASRIKKK).

The protein belongs to the universal ribosomal protein uS13 family. As to quaternary structure, part of the 30S ribosomal subunit. Forms a loose heterodimer with protein S19. Forms two bridges to the 50S subunit in the 70S ribosome.

Its function is as follows. Located at the top of the head of the 30S subunit, it contacts several helices of the 16S rRNA. In the 70S ribosome it contacts the 23S rRNA (bridge B1a) and protein L5 of the 50S subunit (bridge B1b), connecting the 2 subunits; these bridges are implicated in subunit movement. Contacts the tRNAs in the A and P-sites. The polypeptide is Small ribosomal subunit protein uS13 (Kosmotoga olearia (strain ATCC BAA-1733 / DSM 21960 / TBF 19.5.1)).